We begin with the raw amino-acid sequence, 504 residues long: UDP-N-acetylmuramoylalanine--D-glutamate ligase (504 aa).

129-135 (GTNGKTT) is an ATP binding site.

It belongs to the MurCDEF family.

The protein localises to the cytoplasm. The enzyme catalyses UDP-N-acetyl-alpha-D-muramoyl-L-alanine + D-glutamate + ATP = UDP-N-acetyl-alpha-D-muramoyl-L-alanyl-D-glutamate + ADP + phosphate + H(+). The protein operates within cell wall biogenesis; peptidoglycan biosynthesis. Functionally, cell wall formation. Catalyzes the addition of glutamate to the nucleotide precursor UDP-N-acetylmuramoyl-L-alanine (UMA). The sequence is that of UDP-N-acetylmuramoylalanine--D-glutamate ligase from Burkholderia thailandensis (strain ATCC 700388 / DSM 13276 / CCUG 48851 / CIP 106301 / E264).